The sequence spans 548 residues: Folylpolyglutamate synthase (548 aa).

Residue 130–133 (GKGS) coordinates ATP. Positions 157, 234, and 262 each coordinate Mg(2+). Residues Arg-382 and Asp-396 each coordinate ATP.

The protein belongs to the folylpolyglutamate synthase family. Requires a monovalent cation as cofactor.

It localises to the mitochondrion inner membrane. Its subcellular location is the mitochondrion matrix. The protein localises to the cytoplasm. The enzyme catalyses (6S)-5,6,7,8-tetrahydrofolyl-(gamma-L-Glu)(n) + L-glutamate + ATP = (6S)-5,6,7,8-tetrahydrofolyl-(gamma-L-Glu)(n+1) + ADP + phosphate + H(+). It functions in the pathway cofactor biosynthesis; tetrahydrofolylpolyglutamate biosynthesis. Catalyzes conversion of folates to polyglutamate derivatives allowing concentration of folate compounds in the cell and the intracellular retention of these cofactors, which are important substrates for most of the folate-dependent enzymes that are involved in one-carbon transfer reactions involved in purine, pyrimidine and amino acid synthesis. Required for methionine synthesis and maintenance of intact mitochondrial DNA. Involved in telomere maintenance. This chain is Folylpolyglutamate synthase, found in Saccharomyces cerevisiae (strain FostersB) (Baker's yeast).